The primary structure comprises 51 residues: UPF0181 protein VVA0806 (51 aa).

It belongs to the UPF0181 family.

This Vibrio vulnificus (strain YJ016) protein is UPF0181 protein VVA0806.